Here is a 102-residue protein sequence, read N- to C-terminus: Small ribosomal subunit protein uS10 (102 aa).

Belongs to the universal ribosomal protein uS10 family. Part of the 30S ribosomal subunit.

Functionally, involved in the binding of tRNA to the ribosomes. The chain is Small ribosomal subunit protein uS10 from Oenococcus oeni (strain ATCC BAA-331 / PSU-1).